The sequence spans 406 residues: Corticosteroid-binding globulin (406 aa).

A signal peptide spans 1 to 22 (MLLTLYACLLWLSTSGLWTSQA). 3 N-linked (GlcNAc...) asparagine glycosylation sites follow: N95, N119, and N223. Q253 is a binding site for cortisol. N259 carries an N-linked (GlcNAc...) asparagine glycan. Cortisol contacts are provided by Q285 and W394.

Belongs to the serpin family.

Its subcellular location is the secreted. Functionally, major transport protein for glucocorticoids and progestins in the blood of almost all vertebrate species. The sequence is that of Corticosteroid-binding globulin (Serpina6) from Sus scrofa (Pig).